Consider the following 309-residue polypeptide: 2-phospho-L-lactate transferase (309 aa).

Positions 50 and 89 each coordinate 7,8-didemethyl-8-hydroxy-5-deazariboflavin.

This sequence belongs to the CofD family. In terms of assembly, homodimer. Mg(2+) serves as cofactor.

It catalyses the reaction (2S)-lactyl-2-diphospho-5'-guanosine + 7,8-didemethyl-8-hydroxy-5-deazariboflavin = oxidized coenzyme F420-0 + GMP + H(+). The protein operates within cofactor biosynthesis; coenzyme F420 biosynthesis. Functionally, catalyzes the transfer of the 2-phospholactate moiety from (2S)-lactyl-2-diphospho-5'-guanosine to 7,8-didemethyl-8-hydroxy-5-deazariboflavin (FO) with the formation of oxidized coenzyme F420-0 and GMP. In Methanococcus maripaludis (strain C6 / ATCC BAA-1332), this protein is 2-phospho-L-lactate transferase.